A 271-amino-acid polypeptide reads, in one-letter code: S-adenosylmethionine decarboxylase proenzyme (271 aa).

Residue Ser121 is the Schiff-base intermediate with substrate; via pyruvic acid of the active site. A Pyruvic acid (Ser); by autocatalysis modification is found at Ser121. The active-site Proton acceptor; for processing activity is His126. Cys149 acts as the Proton donor; for catalytic activity in catalysis.

It belongs to the prokaryotic AdoMetDC family. Type 2 subfamily. In terms of assembly, heterooctamer of four alpha and four beta chains arranged as a tetramer of alpha/beta heterodimers. Pyruvate serves as cofactor. Post-translationally, is synthesized initially as an inactive proenzyme. Formation of the active enzyme involves a self-maturation process in which the active site pyruvoyl group is generated from an internal serine residue via an autocatalytic post-translational modification. Two non-identical subunits are generated from the proenzyme in this reaction, and the pyruvate is formed at the N-terminus of the alpha chain, which is derived from the carboxyl end of the proenzyme. The post-translation cleavage follows an unusual pathway, termed non-hydrolytic serinolysis, in which the side chain hydroxyl group of the serine supplies its oxygen atom to form the C-terminus of the beta chain, while the remainder of the serine residue undergoes an oxidative deamination to produce ammonia and the pyruvoyl group blocking the N-terminus of the alpha chain.

The enzyme catalyses S-adenosyl-L-methionine + H(+) = S-adenosyl 3-(methylsulfanyl)propylamine + CO2. It participates in amine and polyamine biosynthesis; S-adenosylmethioninamine biosynthesis; S-adenosylmethioninamine from S-adenosyl-L-methionine: step 1/1. Functionally, catalyzes the decarboxylation of S-adenosylmethionine to S-adenosylmethioninamine (dcAdoMet), the propylamine donor required for the synthesis of the polyamines spermine and spermidine from the diamine putrescine. The polypeptide is S-adenosylmethionine decarboxylase proenzyme (Clostridium perfringens (strain SM101 / Type A)).